Reading from the N-terminus, the 289-residue chain is ATP synthase subunit gamma, mitochondrial (289 aa).

Belongs to the ATPase gamma chain family. In terms of assembly, F-type ATPases have 2 components, CF(1) - the catalytic core - and CF(0) - the membrane proton channel. CF(1) has five subunits: alpha(3), beta(3), gamma(1), delta(1), epsilon(1). CF(0) has three main subunits: a, b and c.

The protein localises to the mitochondrion. It is found in the mitochondrion inner membrane. Mitochondrial membrane ATP synthase (F(1)F(0) ATP synthase or Complex V) produces ATP from ADP in the presence of a proton gradient across the membrane which is generated by electron transport complexes of the respiratory chain. F-type ATPases consist of two structural domains, F(1) - containing the extramembraneous catalytic core, and F(0) - containing the membrane proton channel, linked together by a central stalk and a peripheral stalk. During catalysis, ATP synthesis in the catalytic domain of F(1) is coupled via a rotary mechanism of the central stalk subunits to proton translocation. Part of the complex F(1) domain and the central stalk which is part of the complex rotary element. The gamma subunit protrudes into the catalytic domain formed of alpha(3)beta(3). Rotation of the central stalk against the surrounding alpha(3)beta(3) subunits leads to hydrolysis of ATP in three separate catalytic sites on the beta subunits. The sequence is that of ATP synthase subunit gamma, mitochondrial (ATP3) from Kluyveromyces lactis (strain ATCC 8585 / CBS 2359 / DSM 70799 / NBRC 1267 / NRRL Y-1140 / WM37) (Yeast).